We begin with the raw amino-acid sequence, 52 residues long: MISNQQQKDLKKRAAFKKLNVAMNSYVELLFLSVPLIHIFKWLGSLALHLIH.

The helical transmembrane segment at 21–40 threads the bilayer; it reads VAMNSYVELLFLSVPLIHIF.

It localises to the cell membrane. This is an uncharacterized protein from Bacillus subtilis (strain 168).